An 82-amino-acid chain; its full sequence is ATP synthase subunit c (82 aa).

A run of 2 helical transmembrane segments spans residues 7–27 and 53–73; these read LVAL…SIGI and FILA…ALLF.

This sequence belongs to the ATPase C chain family. In terms of assembly, F-type ATPases have 2 components, F(1) - the catalytic core - and F(0) - the membrane proton channel. F(1) has five subunits: alpha(3), beta(3), gamma(1), delta(1), epsilon(1). F(0) has three main subunits: a(1), b(2) and c(10-14). The alpha and beta chains form an alternating ring which encloses part of the gamma chain. F(1) is attached to F(0) by a central stalk formed by the gamma and epsilon chains, while a peripheral stalk is formed by the delta and b chains.

It is found in the cell inner membrane. In terms of biological role, f(1)F(0) ATP synthase produces ATP from ADP in the presence of a proton or sodium gradient. F-type ATPases consist of two structural domains, F(1) containing the extramembraneous catalytic core and F(0) containing the membrane proton channel, linked together by a central stalk and a peripheral stalk. During catalysis, ATP synthesis in the catalytic domain of F(1) is coupled via a rotary mechanism of the central stalk subunits to proton translocation. Its function is as follows. Key component of the F(0) channel; it plays a direct role in translocation across the membrane. A homomeric c-ring of between 10-14 subunits forms the central stalk rotor element with the F(1) delta and epsilon subunits. The chain is ATP synthase subunit c from Acidovorax ebreus (strain TPSY) (Diaphorobacter sp. (strain TPSY)).